The following is a 55-amino-acid chain: Large ribosomal subunit protein bL33A (55 aa).

The protein belongs to the bacterial ribosomal protein bL33 family.

The polypeptide is Large ribosomal subunit protein bL33A (Salinispora tropica (strain ATCC BAA-916 / DSM 44818 / JCM 13857 / NBRC 105044 / CNB-440)).